The chain runs to 863 residues: Glycogen phosphorylase (863 aa).

Position 618 is an N6-(pyridoxal phosphate)lysine (Lys-618).

It belongs to the glycogen phosphorylase family. The cofactor is pyridoxal 5'-phosphate.

It catalyses the reaction [(1-&gt;4)-alpha-D-glucosyl](n) + phosphate = [(1-&gt;4)-alpha-D-glucosyl](n-1) + alpha-D-glucose 1-phosphate. Functionally, phosphorylase is an important allosteric enzyme in carbohydrate metabolism. Enzymes from different sources differ in their regulatory mechanisms and in their natural substrates. However, all known phosphorylases share catalytic and structural properties. The sequence is that of Glycogen phosphorylase (glgP) from Mycobacterium tuberculosis (strain ATCC 25618 / H37Rv).